The chain runs to 295 residues: MDAAPMIHGTTVWPSPAKLNLFLYITGRRANGYHDLQTLFQFLDHGDELTITANNSGNITLSPALADVALEDNLIYKAAMALKNAAQSPLGADIQLHKVLPMGGGIGGGSSNAATTLVALNYLWQTGLSDDQLAEIGLALGADVPVFTRGFAAFAEGVGEELSAVEPEEKWYLVVRPAVSIATKDIFTHPQLMRNTPKRDLASLLTTPYENDCEKIVRSLYPEVDKQLSWLLQYAPSRLTGTGSCVFAEFSSRKDAQAVFAQLSDNVLAFVAQGRNVSPLRKTLADYQSAKIRPY.

The active site involves lysine 18. 101–111 is a binding site for ATP; sequence PMGGGIGGGSS. The active site involves aspartate 143.

This sequence belongs to the GHMP kinase family. IspE subfamily.

It catalyses the reaction 4-CDP-2-C-methyl-D-erythritol + ATP = 4-CDP-2-C-methyl-D-erythritol 2-phosphate + ADP + H(+). It participates in isoprenoid biosynthesis; isopentenyl diphosphate biosynthesis via DXP pathway; isopentenyl diphosphate from 1-deoxy-D-xylulose 5-phosphate: step 3/6. In terms of biological role, catalyzes the phosphorylation of the position 2 hydroxy group of 4-diphosphocytidyl-2C-methyl-D-erythritol. The polypeptide is 4-diphosphocytidyl-2-C-methyl-D-erythritol kinase (Vibrio cholerae serotype O1 (strain ATCC 39315 / El Tor Inaba N16961)).